The following is a 362-amino-acid chain: Leucoanthocyanidin dioxygenase (362 aa).

Residues 211-313 (MEELLLQKKI…RISWAVFCEP (103 aa)) form the Fe2OG dioxygenase domain. Fe cation is bound by residues histidine 238, aspartate 240, and histidine 294.

This sequence belongs to the iron/ascorbate-dependent oxidoreductase family. Requires Fe cation as cofactor. L-ascorbate is required as a cofactor.

The catalysed reaction is a (2R,3S,4S)-leucoanthocyanidin + 2-oxoglutarate + O2 = a 4-H-anthocyanidin with a 3-hydroxy group + succinate + CO2 + 2 H2O. Its pathway is pigment biosynthesis; anthocyanin biosynthesis. In terms of biological role, oxidation of leucoanthocyanidins into anthocyanidins. This Vitis vinifera (Grape) protein is Leucoanthocyanidin dioxygenase.